A 60-amino-acid chain; its full sequence is Large ribosomal subunit protein uL30 (60 aa).

It belongs to the universal ribosomal protein uL30 family. As to quaternary structure, part of the 50S ribosomal subunit.

The polypeptide is Large ribosomal subunit protein uL30 (Histophilus somni (strain 2336) (Haemophilus somnus)).